A 545-amino-acid polypeptide reads, in one-letter code: Tyrosine decarboxylase 2 (545 aa).

Positions 23-44 (GYTNGNGHTNGNGNYNGNGHVN) are enriched in gly residues. The segment at 23-45 (GYTNGNGHTNGNGNYNGNGHVNG) is disordered. L-tyrosine-binding residues include His-245 and His-360. An N6-(pyridoxal phosphate)lysine modification is found at Lys-361. Tyr-390 contacts L-tyrosine.

The protein belongs to the group II decarboxylase family. As to quaternary structure, homotetramer. Pyridoxal 5'-phosphate serves as cofactor. Expressed specifically in flowers.

It is found in the cytoplasm. The enzyme catalyses L-tyrosine + H(+) = tyramine + CO2. Functionally, converts tyrosine into tyramine, a precursor of isoquinoline alkaloids and various amides. The protein is Tyrosine decarboxylase 2 of Arabidopsis thaliana (Mouse-ear cress).